Reading from the N-terminus, the 435-residue chain is ATP-dependent protease ATPase subunit HslU (435 aa).

Residues I18, 60-65 (GVGKTE), D248, E313, and R385 contribute to the ATP site.

The protein belongs to the ClpX chaperone family. HslU subfamily. A double ring-shaped homohexamer of HslV is capped on each side by a ring-shaped HslU homohexamer. The assembly of the HslU/HslV complex is dependent on binding of ATP.

The protein resides in the cytoplasm. In terms of biological role, ATPase subunit of a proteasome-like degradation complex; this subunit has chaperone activity. The binding of ATP and its subsequent hydrolysis by HslU are essential for unfolding of protein substrates subsequently hydrolyzed by HslV. HslU recognizes the N-terminal part of its protein substrates and unfolds these before they are guided to HslV for hydrolysis. This chain is ATP-dependent protease ATPase subunit HslU, found in Allorhizobium ampelinum (strain ATCC BAA-846 / DSM 112012 / S4) (Agrobacterium vitis (strain S4)).